The following is a 35-amino-acid chain: Fatty acid synthase (35 aa).

Residue S12 is part of the active site.

In terms of assembly, homodimer which is arranged in a head to tail fashion. Interacts with CEACAM1; this interaction is insulin and phosphorylation-dependent; reduces fatty-acid synthase activity.

It localises to the cytoplasm. The protein localises to the melanosome. It catalyses the reaction acetyl-CoA + n malonyl-CoA + 2n NADPH + 2n H(+) = a long-chain fatty acid + (n+1) CoA + n CO2 + 2n NADP(+).. Its function is as follows. Fatty acid synthetase catalyzes the formation of long-chain fatty acids from acetyl-CoA, malonyl-CoA and NADPH. This multifunctional protein has 7 catalytic activities as an acyl carrier protein. This fragment is from the acyltransferase domain of the fatty acid synthetase. The chain is Fatty acid synthase (FASN) from Capra hircus (Goat).